The chain runs to 290 residues: 4-hydroxy-tetrahydrodipicolinate synthase (290 aa).

T48 contacts pyruvate. Residue Y137 is the Proton donor/acceptor of the active site. The active-site Schiff-base intermediate with substrate is K165. I206 provides a ligand contact to pyruvate.

Belongs to the DapA family. As to quaternary structure, homotetramer; dimer of dimers.

The protein localises to the cytoplasm. It catalyses the reaction L-aspartate 4-semialdehyde + pyruvate = (2S,4S)-4-hydroxy-2,3,4,5-tetrahydrodipicolinate + H2O + H(+). It participates in amino-acid biosynthesis; L-lysine biosynthesis via DAP pathway; (S)-tetrahydrodipicolinate from L-aspartate: step 3/4. Its function is as follows. Catalyzes the condensation of (S)-aspartate-beta-semialdehyde [(S)-ASA] and pyruvate to 4-hydroxy-tetrahydrodipicolinate (HTPA). The protein is 4-hydroxy-tetrahydrodipicolinate synthase of Ligilactobacillus salivarius (strain UCC118) (Lactobacillus salivarius).